The following is a 274-amino-acid chain: MSQIKPSRLSSSAEIRGARQLDVLQRHKLAEPQQDWLAEEVPVALVYNGISHVVMMATPKDLAAFALGFSLSEGIISSPQEIYAIEITPGCNGIEVNIELSSRRFAGLKERRRAMAGRTGCGVCGIEQLDDIFRPITPLPFTQAFNLEHLDTALAQLKQVQPVGQLTGCTHAAAWINPEGELLGGCEDVGRHVALDKLLGIRAKQPWQQGAVLVSSRASYEMVQKTAMCGAEILFAVSAATTLAVEVAERCNLTLVGFSKPGRATVYTHPQRIK.

Cys-121 acts as the Cysteine persulfide intermediate in catalysis. 258-263 serves as a coordination point for Mo-bis(molybdopterin guanine dinucleotide); sequence FSKPGR.

This sequence belongs to the FdhD family.

It localises to the cytoplasm. Functionally, required for formate dehydrogenase (FDH) activity. Acts as a sulfur carrier protein that transfers sulfur from IscS to the molybdenum cofactor prior to its insertion into FDH. The chain is Sulfur carrier protein FdhD from Yersinia pseudotuberculosis serotype O:1b (strain IP 31758).